The sequence spans 246 residues: Probable transcriptional regulatory protein CLL_A1008 (246 aa).

Belongs to the TACO1 family.

It is found in the cytoplasm. This Clostridium botulinum (strain Eklund 17B / Type B) protein is Probable transcriptional regulatory protein CLL_A1008.